We begin with the raw amino-acid sequence, 151 residues long: UPF0178 protein Tcr_1995 (151 aa).

The disordered stretch occupies residues 116 to 135; it reads RSSGVDTGGPPPLNQKDRQA.

This sequence belongs to the UPF0178 family.

This is UPF0178 protein Tcr_1995 from Hydrogenovibrio crunogenus (strain DSM 25203 / XCL-2) (Thiomicrospira crunogena).